A 146-amino-acid chain; its full sequence is Mediator of RNA polymerase II transcription subunit 10 (146 aa).

This sequence belongs to the Mediator complex subunit 10 family. Component of the Mediator complex.

It is found in the nucleus. Functionally, component of the Mediator complex, a coactivator involved in the regulated transcription of nearly all RNA polymerase II-dependent genes. Mediator functions as a bridge to convey information from gene-specific regulatory proteins to the basal RNA polymerase II transcription machinery. Mediator is recruited to promoters by direct interactions with regulatory proteins and serves as a scaffold for the assembly of a functional preinitiation complex with RNA polymerase II and the general transcription factors. The protein is Mediator of RNA polymerase II transcription subunit 10 (NUT2) of Scheffersomyces stipitis (strain ATCC 58785 / CBS 6054 / NBRC 10063 / NRRL Y-11545) (Yeast).